A 167-amino-acid chain; its full sequence is Photosystem I assembly protein Ycf3 (167 aa).

TPR repeat units lie at residues 35 to 68 (AFTY…EVDA), 72 to 105 (SYIF…NPSL), and 120 to 153 (GEQA…APTN).

This sequence belongs to the Ycf3 family.

It is found in the plastid. The protein localises to the chloroplast thylakoid membrane. In terms of biological role, essential for the assembly of the photosystem I (PSI) complex. May act as a chaperone-like factor to guide the assembly of the PSI subunits. The polypeptide is Photosystem I assembly protein Ycf3 (Pleurastrum terricola (Filamentous green alga)).